Reading from the N-terminus, the 1216-residue chain is FK506-binding protein 15 (1216 aa).

Methionine 1 is subject to N-acetylmethionine. A phosphoserine mark is found at serine 14 and serine 23. Residues 41-68 (YTAPKQPKKGQGTAAGNQTAPKPAPATT) form a disordered region. The segment covering 59-68 (TAPKPAPATT) has biased composition (low complexity). Positions 71–168 (SSVLFATAVH…AVSFNKQVCV (98 aa)) are important for function in growth cone organization. Lysine 91 is subject to N6-acetyllysine. The PPIase FKBP-type domain occupies 196–289 (GDSLEVAYTG…VFEVEVRRVK (94 aa)). Positions 292 to 357 (RDSGSDGHSV…QLTVNSNPDT (66 aa)) are disordered. Positions 303-322 (SRDSAAPSPIPASDSLSADP) are enriched in low complexity. Residues serine 306, serine 310, serine 342, serine 344, and serine 617 each carry the phosphoserine modification. Polar residues predominate over residues 340–356 (SKSNSLSEQLTVNSNPD). Coiled-coil stretches lie at residues 519-790 (MAVN…AAAE) and 820-865 (QQYR…RLEK). The tract at residues 927-1216 (HQEEEEEEEE…DDDDDIGWLG (290 aa)) is disordered. A compositionally biased stretch (acidic residues) spans 929–940 (EEEEEEEEEEEE). The residue at position 948 (serine 948) is a Phosphoserine. The segment covering 954–964 (PATPGMPPAPP) has biased composition (pro residues). Residues 983-994 (TTPLPLQALPTP) show a composition bias toward low complexity. Position 1018 is a phosphoserine (serine 1018). Over residues 1036–1045 (TSIPPKPPGP) the composition is skewed to pro residues. Phosphoserine occurs at positions 1050 and 1091. Threonine 1093 is modified (phosphothreonine). Residues serine 1108, serine 1153, serine 1157, serine 1159, and serine 1190 each carry the phosphoserine modification. Position 1198 is a phosphothreonine (threonine 1198). Acidic residues predominate over residues 1202–1216 (GDDDDDDDDDIGWLG).

Belongs to the FKBP-type PPIase family. In terms of assembly, interacts with WIP and actin. Interacts with TBC1D23. In terms of tissue distribution, expressed in brain, with highest levels in the granular cell layer of cerebellum and in the granule cell layer of dentate gyrus.

The protein resides in the cytoplasm. It localises to the cell projection. The protein localises to the axon. Its subcellular location is the early endosome. Its function is as follows. Involved in the transport of early endosomes at the level of transition between microfilament-based and microtubule-based movement. May be involved in the cytoskeletal organization of neuronal growth cones. Seems to be inactive as a PPIase. The polypeptide is FK506-binding protein 15 (Fkbp15) (Mus musculus (Mouse)).